The chain runs to 185 residues: Elongation factor P (185 aa).

Belongs to the elongation factor P family.

The protein resides in the cytoplasm. It participates in protein biosynthesis; polypeptide chain elongation. Functionally, involved in peptide bond synthesis. Stimulates efficient translation and peptide-bond synthesis on native or reconstituted 70S ribosomes in vitro. Probably functions indirectly by altering the affinity of the ribosome for aminoacyl-tRNA, thus increasing their reactivity as acceptors for peptidyl transferase. In Bordetella bronchiseptica (strain ATCC BAA-588 / NCTC 13252 / RB50) (Alcaligenes bronchisepticus), this protein is Elongation factor P.